A 947-amino-acid polypeptide reads, in one-letter code: Translation initiation factor IF-2 (947 aa).

The tract at residues 47–332 (LRESFGGGKS…RGRKSKRAKR (286 aa)) is disordered. Basic and acidic residues predominate over residues 86 to 95 (APDRSLDAAL). Residues 105 to 123 (APVPAPAPAPTPAPAPAPA) show a composition bias toward pro residues. The segment covering 131-145 (APPAATPAAPAASAA) has biased composition (low complexity). 2 stretches are compositionally biased toward pro residues: residues 146–171 (PAPP…PQAP) and 210–225 (PRPQ…PGAP). Residues 255 to 318 (RPGGGRPGGP…GAAGAFGRPG (64 aa)) are compositionally biased toward gly residues. Residues 322–331 (RRGRKSKRAK) show a composition bias toward basic residues. One can recognise a tr-type G domain in the interval 443–614 (TRPPVVTVMG…AVLLTADAAL (172 aa)). Residues 452–459 (GHVDHGKT) are G1. 452–459 (GHVDHGKT) serves as a coordination point for GTP. Residues 477–481 (GITQH) are G2. A G3 region spans residues 502–505 (DTPG). Residues 502–506 (DTPGH) and 556–559 (NKID) each bind GTP. The interval 556–559 (NKID) is G4. The G5 stretch occupies residues 592-594 (SAK).

Belongs to the TRAFAC class translation factor GTPase superfamily. Classic translation factor GTPase family. IF-2 subfamily.

The protein resides in the cytoplasm. In terms of biological role, one of the essential components for the initiation of protein synthesis. Protects formylmethionyl-tRNA from spontaneous hydrolysis and promotes its binding to the 30S ribosomal subunits. Also involved in the hydrolysis of GTP during the formation of the 70S ribosomal complex. This chain is Translation initiation factor IF-2, found in Mycobacterium marinum (strain ATCC BAA-535 / M).